Here is a 204-residue protein sequence, read N- to C-terminus: CASP-like protein 1U3 (204 aa).

The Cytoplasmic portion of the chain corresponds to 1–19 (MCEGEKKKDSSSGALYCVN). The helical transmembrane segment at 20 to 40 (LALRIVVLGLAVAAAALMATA) threads the bilayer. The Extracellular portion of the chain corresponds to 41–63 (SQCTIFLYYGGPLHTITYKDFGP). The chain crosses the membrane as a helical span at residues 64 to 84 (FVYLVVASSIGAFMEAIAIFL). Residues 85–97 (TICKKKDGTPAKV) lie on the Cytoplasmic side of the membrane. The chain crosses the membrane as a helical span at residues 98–118 (LLPLLDAAVPVLLYSATAAAF). At 119-146 (AAGDMSYCAVGKRVGVCTTAAAGNFCNQ) the chain is on the extracellular side. A helical transmembrane segment spans residues 147–167 (VHIAMYVSLAAGVALLVAEIV). At 168–204 (KHWPDSGKKKEGGGGGCGSDSDSDKSTPCHHGCHSKH) the chain is on the cytoplasmic side. The interval 173-204 (SGKKKEGGGGGCGSDSDSDKSTPCHHGCHSKH) is disordered.

This sequence belongs to the Casparian strip membrane proteins (CASP) family. In terms of assembly, homodimer and heterodimers.

It is found in the cell membrane. This Oryza sativa subsp. japonica (Rice) protein is CASP-like protein 1U3.